We begin with the raw amino-acid sequence, 202 residues long: LexA repressor (202 aa).

The segment at residues 28 to 48 (RAEIAQRLGFRSPNAAEEHLK) is a DNA-binding region (H-T-H motif). Residues S119 and K156 each act as for autocatalytic cleavage activity in the active site.

It belongs to the peptidase S24 family. Homodimer.

The catalysed reaction is Hydrolysis of Ala-|-Gly bond in repressor LexA.. Its function is as follows. Represses a number of genes involved in the response to DNA damage (SOS response), including recA and lexA. Binds to the 16 bp palindromic sequence 5'-CTGTATATATATACAG-3'. In the presence of single-stranded DNA, RecA interacts with LexA causing an autocatalytic cleavage which disrupts the DNA-binding part of LexA, leading to derepression of the SOS regulon and eventually DNA repair. The sequence is that of LexA repressor from Escherichia fergusonii (strain ATCC 35469 / DSM 13698 / CCUG 18766 / IAM 14443 / JCM 21226 / LMG 7866 / NBRC 102419 / NCTC 12128 / CDC 0568-73).